Consider the following 153-residue polypeptide: Small ribosomal subunit protein uS19 (153 aa).

The segment at 1–63 (MGFRGAWNKR…QEIWDEFRAF (63 aa)) is unknown. The interval 64–153 (VNKKAWVDPK…EKSAKVVKKK (90 aa)) is small ribosomal subunit protein uS19.

It belongs to the universal ribosomal protein uS19 family.

Its function is as follows. Protein S19 forms a complex with S13 that binds strongly to the 16S ribosomal RNA. In Hydrogenobaculum sp. (strain Y04AAS1), this protein is Small ribosomal subunit protein uS19.